We begin with the raw amino-acid sequence, 579 residues long: Nuclear hormone receptor family member nhr-22 (579 aa).

The segment at residues 93 to 173 (SRSCHVCSSP…AGMRRELVQA (81 aa)) is a DNA-binding region (nuclear receptor). 2 consecutive NR C4-type zinc fingers follow at residues 96–117 (CHVC…CKAC) and 133–161 (CIGT…FIKC). Over residues 233–242 (LSPDPSSSQP) the composition is skewed to low complexity. The disordered stretch occupies residues 233–256 (LSPDPSSSQPLDMTVTPPPLHRST). One can recognise an NR LBD domain in the interval 304 to 577 (EVENKIFELV…SIMYDLLSFR (274 aa)).

Belongs to the nuclear hormone receptor family.

It is found in the nucleus. Orphan nuclear receptor. This is Nuclear hormone receptor family member nhr-22 (nhr-22) from Caenorhabditis elegans.